Reading from the N-terminus, the 577-residue chain is Insulin-like growth factor 2 mRNA-binding protein 1 (577 aa).

2 consecutive RRM domains span residues 2 to 75 and 81 to 156; these read NKLY…HSVP and RKIQ…YIPD. S12 and S73 each carry phosphoserine. A disordered region spans residues 160–190; that stretch reads AQGPENGRRGGFGSRGQPRQGSPVAAGAPAK. Position 181 is a phosphoserine (S181). KH domains lie at 195–260, 276–343, 405–470, and 487–553; these read DIPL…CKMI, EVPL…EQEI, QEMV…QGRI, and KLET…QRKI. Residues 310 to 324 are sufficient for nuclear export; sequence ITISSLQDLTLYNPE. The sufficient for nuclear export stretch occupies residues 485 to 495; that stretch reads EVKLETHIRVP. T528 carries the phosphothreonine modification.

Belongs to the RRM IMP/VICKZ family. As to quaternary structure, can form homodimers and heterodimers with IGF2BP1 and IGF2BP3. Component of the coding region determinant (CRD)-mediated complex, composed of DHX9, HNRNPU, IGF2BP1, SYNCRIP and YBX1. During HCV infection, identified in a HCV IRES-mediated translation complex, at least composed of EIF3C, IGF2BP1, RPS3 and HCV RNA-replicon. Interacts (via the KH domains) with HIV-1 GAG (via the second zinc finger motif of NC). Associates (via the RRM domains and KH domains) with HIV-1 particles. Identified in a mRNP complex, composed of at least DHX9, DDX3X, ELAVL1, HNRNPU, IGF2BP1, ILF3, PABPC1, PCBP2, PTBP2, STAU1, STAU2, SYNCRIP and YBX1. Identified in a IGF2BP1-dependent mRNP granule complex containing untranslated mRNAs. Interacts with DHX9, ELAVL2, HNRNPA2B1, HNRNPC, HNRNPH1, HNRNPU, IGF2BP2, ILF2, and YBX1. Interacts with FMR1. Component of a multisubunit autoregulatory RNP complex (ARC), at least composed of IGF2BP1, PABPC1 and CSDE1/UNR. Directly interacts with PABPC1. Component of a TAU mRNP complex, at least composed of IGF2BP1, ELAVL4 and G3BP. Interacts with ELAVL4 in an RNA-dependent manner. Associates with microtubules and polysomes. Interacts with AGO1 and AGO2. Interacts with ELAVL1 and MATR3. Interacts (via KH3 and KH4 domains) with SEPIN14P20 peptide RBRP; the interaction results in increased binding of IGF2BP1 to N6-methyladenosine (m6A)-containing mRNAs. Phosphorylated at Ser-181 by mTORC2 cotranslationally, promoting binding to the 3'-UTR of IGF2 mRNA. Mainly expressed in the embryo, including in fetal liver, fetal lung, fetal kidney, fetal thymus (at protein level). Also expressed follicles of ovary, as well as in gonocytes of testis, spermatogonia, semen, oocytes and placenta (at protein level). Expressed in various cancers, including testis and lung cancers (at protein level), as well as kidney, prostate and trachea cancers.

It localises to the nucleus. The protein resides in the cytoplasm. The protein localises to the perinuclear region. Its subcellular location is the P-body. It is found in the stress granule. It localises to the cell projection. The protein resides in the lamellipodium. The protein localises to the dendrite. Its subcellular location is the dendritic spine. It is found in the growth cone. It localises to the filopodium. The protein resides in the axon. RNA-binding factor that recruits target transcripts to cytoplasmic protein-RNA complexes (mRNPs). This transcript 'caging' into mRNPs allows mRNA transport and transient storage. It also modulates the rate and location at which target transcripts encounter the translational apparatus and shields them from endonuclease attacks or microRNA-mediated degradation. Preferentially binds to N6-methyladenosine (m6A)-containing mRNAs and increases their stability. Plays a direct role in the transport and translation of transcripts required for axonal regeneration in adult sensory neurons. Regulates localized beta-actin/ACTB mRNA translation, a crucial process for cell polarity, cell migration and neurite outgrowth. Co-transcriptionally associates with the ACTB mRNA in the nucleus. This binding involves a conserved 54-nucleotide element in the ACTB mRNA 3'-UTR, known as the 'zipcode'. The RNP thus formed is exported to the cytoplasm, binds to a motor protein and is transported along the cytoskeleton to the cell periphery. During transport, prevents ACTB mRNA from being translated into protein. When the RNP complex reaches its destination near the plasma membrane, IGF2BP1 is phosphorylated. This releases the mRNA, allowing ribosomal 40S and 60S subunits to assemble and initiate ACTB protein synthesis. Monomeric ACTB then assembles into the subcortical actin cytoskeleton. During neuronal development, key regulator of neurite outgrowth, growth cone guidance and neuronal cell migration, presumably through the spatiotemporal fine tuning of protein synthesis, such as that of ACTB. May regulate mRNA transport to activated synapses. Binds to and stabilizes ABCB1/MDR-1 mRNA. During interstinal wound repair, interacts with and stabilizes PTGS2 transcript. PTGS2 mRNA stabilization may be crucial for colonic mucosal wound healing. Binds to the 3'-UTR of IGF2 mRNA by a mechanism of cooperative and sequential dimerization and regulates IGF2 mRNA subcellular localization and translation. Binds to MYC mRNA, in the coding region instability determinant (CRD) of the open reading frame (ORF), hence preventing MYC cleavage by endonucleases and possibly microRNA targeting to MYC-CRD. Binding to MYC mRNA is enhanced by m6A-modification of the CRD. Binds to the 3'-UTR of CD44 mRNA and stabilizes it, hence promotes cell adhesion and invadopodia formation in cancer cells. Binds to the oncofetal H19 transcript and to the neuron-specific TAU mRNA and regulates their localizations. Binds to and stabilizes BTRC/FBW1A mRNA. Binds to the adenine-rich autoregulatory sequence (ARS) located in PABPC1 mRNA and represses its translation. PABPC1 mRNA-binding is stimulated by PABPC1 protein. Prevents BTRC/FBW1A mRNA degradation by disrupting microRNA-dependent interaction with AGO2. Promotes the directed movement of tumor-derived cells by fine-tuning intracellular signaling networks. Binds to MAPK4 3'-UTR and inhibits its translation. Interacts with PTEN transcript open reading frame (ORF) and prevents mRNA decay. This combined action on MAPK4 (down-regulation) and PTEN (up-regulation) antagonizes HSPB1 phosphorylation, consequently it prevents G-actin sequestration by phosphorylated HSPB1, allowing F-actin polymerization. Hence enhances the velocity of cell migration and stimulates directed cell migration by PTEN-modulated polarization. Interacts with Hepatitis C virus (HCV) 5'-UTR and 3'-UTR and specifically enhances translation at the HCV IRES, but not 5'-cap-dependent translation, possibly by recruiting eIF3. Interacts with HIV-1 GAG protein and blocks the formation of infectious HIV-1 particles. Reduces HIV-1 assembly by inhibiting viral RNA packaging, as well as assembly and processing of GAG protein on cellular membranes. During cellular stress, such as oxidative stress or heat shock, stabilizes target mRNAs that are recruited to stress granules, including CD44, IGF2, MAPK4, MYC, PTEN, RAPGEF2 and RPS6KA5 transcripts. This is Insulin-like growth factor 2 mRNA-binding protein 1 (IGF2BP1) from Homo sapiens (Human).